The sequence spans 226 residues: Ribonuclease 3 (226 aa).

The RNase III domain maps to 6–128; the sequence is VNQLQKKLGY…LIGAIFLDSD (123 aa). Glutamate 41 serves as a coordination point for Mg(2+). Residue aspartate 45 is part of the active site. Residues aspartate 114 and glutamate 117 each coordinate Mg(2+). Residue glutamate 117 is part of the active site. A DRBM domain is found at 155–225; that stretch reads DPKTRLQEYL…AEQALIQLEL (71 aa).

It belongs to the ribonuclease III family. As to quaternary structure, homodimer. It depends on Mg(2+) as a cofactor.

The protein resides in the cytoplasm. It catalyses the reaction Endonucleolytic cleavage to 5'-phosphomonoester.. Its function is as follows. Digests double-stranded RNA. Involved in the processing of primary rRNA transcript to yield the immediate precursors to the large and small rRNAs (23S and 16S). Processes some mRNAs, and tRNAs when they are encoded in the rRNA operon. Processes pre-crRNA and tracrRNA of type II CRISPR loci if present in the organism. This chain is Ribonuclease 3, found in Proteus mirabilis (strain HI4320).